A 183-amino-acid polypeptide reads, in one-letter code: Capsid protein (183 aa).

The interval Leu-143–Cys-183 is disordered. A compositionally biased stretch (basic residues) spans Val-149 to Gln-177. Residues Ser-155, Ser-162, and Ser-170 each carry the phosphoserine; by host modification. The 1; half-length repeat unit spans residues Ser-155–Pro-161. Residues Ser-155–Gln-177 are 3 X 8 AA repeats of S-P-R-R-R-[PR]-S-Q. The Bipartite nuclear localization signal signature appears at Arg-158–Arg-175. Repeat copies occupy residues Ser-162–Gln-169 and Ser-170–Gln-177. The interval Gln-177–Cys-183 is RNA binding.

Belongs to the orthohepadnavirus core antigen family. In terms of assembly, homodimerizes, then multimerizes. Interacts with cytosol exposed regions of viral L glycoprotein present in the reticulum-to-Golgi compartment. Interacts with human FLNB. Phosphorylated form interacts with host importin alpha; this interaction depends on the exposure of the NLS, which itself depends upon genome maturation and/or phosphorylation of the capsid protein. Interacts with host NUP153. Post-translationally, phosphorylated by host SRPK1, SRPK2, and maybe protein kinase C or GAPDH. Phosphorylation is critical for pregenomic RNA packaging. Protein kinase C phosphorylation is stimulated by HBx protein and may play a role in transport of the viral genome to the nucleus at the late step during the viral replication cycle.

It localises to the virion. The protein localises to the host cytoplasm. Functionally, self assembles to form an icosahedral capsid. Most capsids appear to be large particles with an icosahedral symmetry of T=4 and consist of 240 copies of capsid protein, though a fraction forms smaller T=3 particles consisting of 180 capsid proteins. Entering capsids are transported along microtubules to the nucleus. Phosphorylation of the capsid is thought to induce exposure of nuclear localization signal in the C-terminal portion of the capsid protein that allows binding to the nuclear pore complex via the importin (karyopherin-) alpha and beta. Capsids are imported in intact form through the nuclear pore into the nuclear basket, where it probably binds NUP153. Only capsids that contain the mature viral genome can release the viral DNA and capsid protein into the nucleoplasm. Immature capsids get stuck in the basket. Capsids encapsulate the pre-genomic RNA and the P protein. Pre-genomic RNA is reverse-transcribed into DNA while the capsid is still in the cytoplasm. The capsid can then either be directed to the nucleus, providing more genomes for transcription, or bud through the endoplasmic reticulum to provide new virions. The protein is Capsid protein of Homo sapiens (Human).